Reading from the N-terminus, the 147-residue chain is uncharacterized protein (147 aa).

The N-terminal stretch at 1 to 21 is a signal peptide; that stretch reads MRTIFVGVLLLAIMGEGRLCA.

This is an uncharacterized protein from Treponema pallidum (strain Nichols).